The primary structure comprises 513 residues: Na(+)/H(+) antiporter NhaB (513 aa).

12 helical membrane-spanning segments follow: residues 21–41 (ICII…SPFV), 64–84 (QPGG…AHHV), 88–108 (IMAN…IYFM), 119–139 (LLIV…SATF), 143–163 (FLDA…FYGV), 202–222 (LLMH…VGEP), 243–263 (LPVS…LEHF), 299–318 (MGIQ…LHLA), 322–344 (IIGL…HAIG), 350–370 (PMPF…IVDL), 389–409 (LALF…VFVG), and 477–497 (MALP…EFLL).

It belongs to the NhaB Na(+)/H(+) (TC 2.A.34) antiporter family.

It is found in the cell inner membrane. It carries out the reaction 2 Na(+)(in) + 3 H(+)(out) = 2 Na(+)(out) + 3 H(+)(in). Na(+)/H(+) antiporter that extrudes sodium in exchange for external protons. The protein is Na(+)/H(+) antiporter NhaB of Actinobacillus pleuropneumoniae serotype 3 (strain JL03).